The chain runs to 193 residues: UPF0301 protein SCO2948 (193 aa).

It belongs to the UPF0301 (AlgH) family.

In Streptomyces coelicolor (strain ATCC BAA-471 / A3(2) / M145), this protein is UPF0301 protein SCO2948.